A 371-amino-acid chain; its full sequence is MSFRKVNIVILVLAVALFLLVLHHNFLGLSSLLRNEVSDSGIVGLQPVDFIPNAPQRVVDGREEEIPVVIAASEDRLGGAIAAINSIQHNTRSNVIFYIVTLNGTADHLRSWLSSSNLKRIRYKIVNFDTKLLEGKVKEDPDQGESIKPLTFARFYLPILVPRAKKAIYMDDDVIVQGDILALYNTPLKPGHAAAFSEDCDSTSAKVVIRGAGNQYNYIGYLDYKKERIRELSMKASTCSFNPGVFVANLTEWRRQNITNQLEKWMKLNVEEGLYSRTLAGSITTPPLLIVFYQQHSTIDPMWNVRHLGSSAGKRYSPQFVKAAKLLHWNGHFKPWGRTASYTDVWEKWYIPDPTGKFSLIRRHVEISNTK.

Residues 1-7 (MSFRKVN) are Cytoplasmic-facing. A helical; Signal-anchor for type II membrane protein membrane pass occupies residues 8–28 (IVILVLAVALFLLVLHHNFLG). The Lumenal portion of the chain corresponds to 29-371 (LSSLLRNEVS…RRHVEISNTK (343 aa)). N-linked (GlcNAc...) asparagine glycans are attached at residues Asn-103 and Asn-257.

The protein belongs to the glycosyltransferase 8 family.

It is found in the membrane. In Bos taurus (Bovine), this protein is Glycosyltransferase 8 domain-containing protein 1 (GLT8D1).